Here is a 272-residue protein sequence, read N- to C-terminus: Imidazole glycerol phosphate synthase subunit HisF (272 aa).

Catalysis depends on residues D11 and D130.

This sequence belongs to the HisA/HisF family. In terms of assembly, heterodimer of HisH and HisF.

It localises to the cytoplasm. The enzyme catalyses 5-[(5-phospho-1-deoxy-D-ribulos-1-ylimino)methylamino]-1-(5-phospho-beta-D-ribosyl)imidazole-4-carboxamide + L-glutamine = D-erythro-1-(imidazol-4-yl)glycerol 3-phosphate + 5-amino-1-(5-phospho-beta-D-ribosyl)imidazole-4-carboxamide + L-glutamate + H(+). It functions in the pathway amino-acid biosynthesis; L-histidine biosynthesis; L-histidine from 5-phospho-alpha-D-ribose 1-diphosphate: step 5/9. Its function is as follows. IGPS catalyzes the conversion of PRFAR and glutamine to IGP, AICAR and glutamate. The HisF subunit catalyzes the cyclization activity that produces IGP and AICAR from PRFAR using the ammonia provided by the HisH subunit. This chain is Imidazole glycerol phosphate synthase subunit HisF, found in Methanococcus maripaludis (strain C6 / ATCC BAA-1332).